The following is a 295-amino-acid chain: Tyrosine recombinase XerC (295 aa).

Residues 1-84 (MTLEEQFLSY…SLKSFYRFLT (84 aa)) form the Core-binding (CB) domain. The 185-residue stretch at 105–289 (KLPEFFYQDE…SMQHLTVEYR (185 aa)) folds into the Tyr recombinase domain. Catalysis depends on residues Arg-145, Lys-169, His-241, Arg-244, and His-267. Residue Tyr-276 is the O-(3'-phospho-DNA)-tyrosine intermediate of the active site.

The protein belongs to the 'phage' integrase family. XerC subfamily. As to quaternary structure, forms a cyclic heterotetrameric complex composed of two molecules of XerC and two molecules of XerD.

The protein localises to the cytoplasm. Its function is as follows. Site-specific tyrosine recombinase, which acts by catalyzing the cutting and rejoining of the recombining DNA molecules. The XerC-XerD complex is essential to convert dimers of the bacterial chromosome into monomers to permit their segregation at cell division. It also contributes to the segregational stability of plasmids. The chain is Tyrosine recombinase XerC from Lactobacillus delbrueckii subsp. bulgaricus (strain ATCC 11842 / DSM 20081 / BCRC 10696 / JCM 1002 / NBRC 13953 / NCIMB 11778 / NCTC 12712 / WDCM 00102 / Lb 14).